The sequence spans 90 residues: MKKNSFISVISDEKKEENKGSVEFQVFCFTNKIRRLTLHLELHKKDYSSQRGLRKTLGKRQRLLAYLLKINGVRYKELISKLNIRELKTR.

Component of the chloroplast small ribosomal subunit (SSU). Mature 70S chloroplast ribosomes of higher plants consist of a small (30S) and a large (50S) subunit. The 30S small subunit contains 1 molecule of ribosomal RNA (16S rRNA) and 24 different proteins. The 50S large subunit contains 3 rRNA molecules (23S, 5S and 4.5S rRNA) and 33 different proteins.

Its subcellular location is the plastid. The protein resides in the chloroplast. Functionally, component of the chloroplast ribosome (chloro-ribosome), a dedicated translation machinery responsible for the synthesis of chloroplast genome-encoded proteins, including proteins of the transcription and translation machinery and components of the photosynthetic apparatus. This Spinacia oleracea (Spinach) protein is Small ribosomal subunit protein uS15c (rps15).